A 554-amino-acid polypeptide reads, in one-letter code: MASSQSSSSSIRPQAGLNEGDHQSLPQLDTLISYLLGAKRSLSSITHVWRANEIVTASHSALEKSVVLCSRTGFLRRGLNGQLRLLYDVRSEVEQISYRGRDEFSIALKNLDAADARLKHTLDLLRGTIVHASFRPGDEEQKSLHDFVDERGVEELHASLKASIDRTNTARAELDTSNHEFDDELQAIKKSLRHYHTATKLASSRLSITSSSSSASDSGLLTLSSMPGQIQSLEAHAQEMATLLEALVRHFDLCVTAVKHTDGGGAVARSITGDMPAGVDGSNDGMPNIGAEINANLNAPLDPMTDAEYQEMVAVLIKDAPEADDVVMEIQDRINEMESIFEQVQAQRDALLSISKATIEVHSHLSSLASSRLPRYISQAHNFTRVWLEENDRINSGLVELSDLHSLYDGFLNAYDSLMLEVARRRHVRQRVEKVLRDTRHKLDQLHDEDAAARETFRAEQGDFLPSDIWPGVGLAPMQVQFTRLSGGQLDGGPIGQKPLEEPSGGEYAGAAKAGVSDGSAEGEQIPDLPRHLVEEAYARVKARNKVASQLHTV.

Over residues 1–10 (MASSQSSSSS) the composition is skewed to low complexity. The disordered stretch occupies residues 1-22 (MASSQSSSSSIRPQAGLNEGDH). Residues 327–353 (VMEIQDRINEMESIFEQVQAQRDALLS) adopt a coiled-coil conformation. The tract at residues 490 to 529 (LDGGPIGQKPLEEPSGGEYAGAAKAGVSDGSAEGEQIPDL) is disordered.

It belongs to the ATG17 family.

It localises to the cytoplasm. It is found in the preautophagosomal structure membrane. Its function is as follows. Autophagy-specific protein that functions in response to autophagy-inducing signals as a scaffold to recruit other ATG proteins to organize pre-autophagosomal structure (PAS) formation. Modulates the timing and magnitude of the autophagy response, such as the size of the sequestering vesicles. Plays particularly a role in pexophagy and nucleophagy. The protein is Autophagy-related protein 17 (atg17) of Penicillium rubens (strain ATCC 28089 / DSM 1075 / NRRL 1951 / Wisconsin 54-1255) (Penicillium chrysogenum).